The chain runs to 223 residues: MSREALINRITNETKIQIALNLDGGKLELKESIFPNQSIIIDEHHAKQVSGSQYINVQTGIGFLDHMIHALAKHSGWSLIVECIGDLHIDDHHTAEDVGISLGMAFKQALGQIKGVKRFGHGFAPLDEALSRAVVDLSNRPFAVIELGLKREKIGDLSTEMIPHVLESFAGAVGITIHVDCLRGFNDHHRAESAFKALAIAIKEAISKTGKNDIPSTKGVLSK.

The protein belongs to the imidazoleglycerol-phosphate dehydratase family.

The enzyme catalyses D-erythro-1-(imidazol-4-yl)glycerol 3-phosphate = 3-(imidazol-4-yl)-2-oxopropyl phosphate + H2O. It participates in amino-acid biosynthesis; L-histidine biosynthesis; L-histidine from 5-phospho-alpha-D-ribose 1-diphosphate: step 6/9. This is Imidazoleglycerol-phosphate dehydratase (HIS3) from Candida albicans (Yeast).